A 1818-amino-acid chain; its full sequence is Integrin beta-4 (1818 aa).

Residues 1–28 (MAGPCCSPWVKLLLLAAMLSASLPGDLA) form the signal peptide. At 29–712 (NRCKKAQVKS…HKKKDCPPGS (684 aa)) the chain is on the extracellular side. Residues 30–74 (RCKKAQVKSCTECIRVDKSCAYCTDELFKERRCNTQAELLAAGCR) form the PSI domain. Disulfide bonds link Cys31-Cys49, Cys39-Cys457, Cys42-Cys62, Cys52-Cys73, Cys246-Cys289, Cys459-Cys478, Cys470-Cys481, and Cys483-Cys492. Residues 132–310 (DLYILMDFSN…KTQDYPSVPT (179 aa)) form the VWFA domain. Residues Ser140 and Ser142 each coordinate Mg(2+). Ser142, Asp145, Asp146, and Asp177 together coordinate Ca(2+). The involved in NRG1- and IGF1-binding stretch occupies residues 195–200 (WPNSDP). Ca(2+) is bound by residues Asn229, Asp231, Pro233, and Glu234. A Mg(2+)-binding site is contributed by Glu234. Residue Asn328 is glycosylated (N-linked (GlcNAc...) asparagine). Residue Glu351 participates in Ca(2+) binding. 4 I-EGF domains span residues 459 to 493 (CELQ…KTCN), 494 to 539 (CSTG…HFCE), 540 to 576 (YDNF…RSCD), and 577 to 617 (CPLS…TTCE). The Cell attachment site signature appears at 473 to 475 (RGD). Asn493 is a glycosylation site (N-linked (GlcNAc...) asparagine). 11 disulfides stabilise this stretch: Cys494–Cys522, Cys505–Cys520, Cys514–Cys525, Cys527–Cys538, Cys545–Cys559, Cys553–Cys564, Cys566–Cys575, Cys577–Cys600, Cys584–Cys598, Cys592–Cys603, and Cys605–Cys616. The N-linked (GlcNAc...) asparagine glycan is linked to Asn581. An N-linked (GlcNAc...) asparagine glycan is attached at Asn619. Disulfide bonds link Cys628/Cys673, Cys634/Cys653, Cys637/Cys650, and Cys682/Cys708. N-linked (GlcNAc...) asparagine glycosylation is present at Asn697. Residues 713-733 (FWWLIPLLIFLLLLLALLLLL) form a helical membrane-spanning segment. The interval 734–751 (CWKYCACCKACLGLLPCC) is palmitoylated on several cysteines. The Cytoplasmic segment spans residues 734–1818 (CWKYCACCKA…THMDQQFFQT (1085 aa)). Residue Ser773 is modified to Phosphoserine. In terms of domain architecture, Calx-beta spans 981 to 1086 (VNITIIKEQA…QVRRFQVQLS (106 aa)). A Cell attachment site motif is present at residues 1005–1007 (RGD). Phosphoserine occurs at positions 1071 and 1121. Residues 1115–1137 (INQTLSSPPPPHGDLGAPQNPNA) are disordered. Fibronectin type-III domains are found at residues 1131 to 1220 (APQN…THQE) and 1224 to 1323 (EPGR…TQPK). The segment at 1402 to 1433 (LSASSGRSDEDGSVAGGVEGEGSGWIRGATPR) is disordered. The span at 1415–1426 (VAGGVEGEGSGW) shows a compositional bias: gly residues. Phosphoserine is present on residues Ser1451, Ser1454, and Ser1470. Residue Thr1483 is modified to Phosphothreonine. A Phosphoserine modification is found at Ser1490. A Phosphothreonine modification is found at Thr1526. Fibronectin type-III domains follow at residues 1526-1621 (TPTR…VHPQ) and 1639-1735 (APGP…SQVG). Position 1787 is a phosphoserine (Ser1787).

Belongs to the integrin beta chain family. Heterodimer of an alpha and a beta subunit. Beta-4 associates with alpha-6. Interacts (via cytoplasmic region) with COL17A1 (via cytoplasmic region). Interacts (via cytoplasmic region) with DST isoform 3 (via N-terminus). Interacts (via cytoplasmic domain) with DST (via N-terminus). Interacts with RAC1. ITGA6:ITGB4 is found in a ternary complex with NRG1 and ERBB3. ITGA6:ITGB4 is found in a ternary complex with IGF1 and IGF1R. ITGA6:ITGB4 interacts with IGF2. Interacts with TMEM268; this interaction prevents ITGB4 degradation. Palmitoylated by DHHC3 at several cysteines of the membrane-proximal region, enhancing stability and cell surface expression. Palmitoylation also promotes secondary association with tertaspanins.

Its subcellular location is the cell membrane. It localises to the cell junction. The protein resides in the hemidesmosome. Functionally, integrin alpha-6/beta-4 is a receptor for laminin. It plays a critical structural role in the hemidesmosome of epithelial cells. Is required for the regulation of keratinocyte polarity and motility. ITGA6:ITGB4 binds to NRG1 (via EGF domain) and this binding is essential for NRG1-ERBB signaling. ITGA6:ITGB4 binds to IGF1 and this binding is essential for IGF1 signaling. ITGA6:ITGB4 binds to IGF2 and this binding is essential for IGF2 signaling. The polypeptide is Integrin beta-4 (Itgb4) (Mus musculus (Mouse)).